We begin with the raw amino-acid sequence, 350 residues long: uncharacterized protein (350 aa).

The 164-residue stretch at 164-327 (NDPLPGYVEV…EKTRIGARVV (164 aa)) folds into the Integrase catalytic domain.

This is an uncharacterized protein from Sinorhizobium fredii (strain NBRC 101917 / NGR234).